The sequence spans 191 residues: Cell division protein SepF (191 aa).

Polar residues predominate over residues 157 to 178; that stretch reads YLNESPAQPVQTTTSFGRTATP. Residues 157 to 191 are disordered; sequence YLNESPAQPVQTTTSFGRTATPTPAWGTDSRYAAQ.

This sequence belongs to the SepF family. Homodimer. Interacts with FtsZ.

It localises to the cytoplasm. Its function is as follows. Cell division protein that is part of the divisome complex and is recruited early to the Z-ring. Probably stimulates Z-ring formation, perhaps through the cross-linking of FtsZ protofilaments. Its function overlaps with FtsA. This Synechococcus elongatus (strain ATCC 33912 / PCC 7942 / FACHB-805) (Anacystis nidulans R2) protein is Cell division protein SepF.